A 119-amino-acid polypeptide reads, in one-letter code: Beta-2-microglobulin (119 aa).

The first 20 residues, 1 to 20, serve as a signal peptide directing secretion; it reads MARSVTVIFLVLVSLAVVLA. In terms of domain architecture, Ig-like C1-type spans 25–114; that stretch reads PQIQVYSRHP…VTLKEPKTVT (90 aa). An intrachain disulfide couples cysteine 45 to cysteine 100.

Belongs to the beta-2-microglobulin family. As to quaternary structure, heterodimer of an alpha chain and a beta chain. Beta-2-microglobulin is the beta-chain of major histocompatibility complex class I molecules. Forms a heterotrimer with MR1 and a metabolite antigen.

The protein resides in the secreted. Functionally, component of the class I major histocompatibility complex (MHC). Involved in the presentation of peptide antigens to the immune system. This chain is Beta-2-microglobulin (B2m), found in Rattus norvegicus (Rat).